The primary structure comprises 1066 residues: DNA primase (1066 aa).

The segment at 694 to 727 is disordered; it reads DGPSAGGDDGDGDWFPDAGGPGDEEWEEDTDPMD. Acidic residues predominate over residues 715 to 725; that stretch reads GDEEWEEDTDP. The CHC2-type zinc-finger motif lies at 995–1035; that stretch reads CLRFKHGRASRATARTFLALSVGTNNRLCASLCQQCFATKC.

This sequence belongs to the herpesviridae DNA primase family. As to quaternary structure, associates with the helicase and the primase-associated factor to form the helicase-primase factor.

It localises to the host nucleus. Its function is as follows. Essential component of the helicase/primase complex. Unwinds the DNA at the replication forks and generates single-stranded DNA for both leading and lagging strand synthesis. The primase initiates primer synthesis and thereby produces large amount of short RNA primers on the lagging strand that the polymerase elongates using dNTPs. The chain is DNA primase from Human herpesvirus 2 (strain HG52) (HHV-2).